The chain runs to 371 residues: Protein SPATA31F3 (371 aa).

The helical transmembrane segment at 7 to 29 (ILWDVGSSVYTYGSLFIIALIIW) threads the bilayer. Positions 62–86 (LRVKKRTTKEETEKLQKLLSNMKRQ) form a coiled coil. 2 stretches are compositionally biased toward polar residues: residues 189–203 (LSKV…LSSQ) and 244–266 (PQQQ…SSSS). Disordered regions lie at residues 189 to 222 (LSKV…STDQ), 240 to 299 (YHPA…EAEM), and 326 to 371 (YKSE…KRNI). S197 and S198 each carry phosphoserine. Positions 277 to 287 (QKKRKKTKKLV) are enriched in basic residues. Residues 330–362 (TGAKPKTGEPKKSSAKVRAEEPNLEKHAKDLKA) are compositionally biased toward basic and acidic residues.

Belongs to the SPATA31 family.

It localises to the membrane. The polypeptide is Protein SPATA31F3 (Spata31f3) (Mus musculus (Mouse)).